A 440-amino-acid polypeptide reads, in one-letter code: Elongation factor 1-alpha (440 aa).

The region spanning 5 to 228 is the tr-type G domain; the sequence is KPHINLVVIG…ALDTYIQPPK (224 aa). Positions 14-21 are G1; it reads GHVDHGKS. 14–21 is a binding site for GTP; the sequence is GHVDHGKS. Residue Ser-21 participates in Mg(2+) binding. The G2 stretch occupies residues 70–74; it reads GVTID. The interval 91 to 94 is G3; sequence DAPG. Residues 91–95 and 153–156 each bind GTP; these read DAPGH and NKMD. The tract at residues 153-156 is G4; that stretch reads NKMD. Residues 194–196 are G5; the sequence is SAW.

It belongs to the TRAFAC class translation factor GTPase superfamily. Classic translation factor GTPase family. EF-Tu/EF-1A subfamily.

The protein resides in the cytoplasm. It carries out the reaction GTP + H2O = GDP + phosphate + H(+). Its function is as follows. GTP hydrolase that promotes the GTP-dependent binding of aminoacyl-tRNA to the A-site of ribosomes during protein biosynthesis. The protein is Elongation factor 1-alpha of Hyperthermus butylicus (strain DSM 5456 / JCM 9403 / PLM1-5).